We begin with the raw amino-acid sequence, 550 residues long: Integral membrane protein DGCR2/IDD (550 aa).

A signal peptide spans methionine 1–valine 20. Residues threonine 21–arginine 349 lie on the Extracellular side of the membrane. The 41-residue stretch at leucine 28–glutamate 68 folds into the LDL-receptor class A domain. Intrachain disulfides connect cysteine 30–cysteine 44, cysteine 37–cysteine 57, and cysteine 51–cysteine 66. Residues valine 69 to glycine 92 are disordered. Basic and acidic residues predominate over residues glycine 71 to glycine 92. The C-type lectin domain maps to cysteine 115–phenylalanine 241. Disulfide bonds link cysteine 145–cysteine 265 and cysteine 233–cysteine 257. Asparagine 149 and asparagine 196 each carry an N-linked (GlcNAc...) asparagine glycan. Residues threonine 270–leucine 333 enclose the VWFC domain. Residues leucine 350–valine 368 form a helical membrane-spanning segment. The Cytoplasmic portion of the chain corresponds to histidine 369–valine 550. Serine 381 is modified (phosphoserine). Residues alanine 500–valine 550 form a disordered region.

As to expression, predominantly expressed in brain, heart, lung and fetal kidney. Low levels in liver and adult kidney.

It localises to the membrane. Functionally, putative adhesion receptor, that could be involved in cell-cell or cell-matrix interactions required for normal cell differentiation and migration. This Homo sapiens (Human) protein is Integral membrane protein DGCR2/IDD (DGCR2).